Here is a 380-residue protein sequence, read N- to C-terminus: Cytochrome b (380 aa).

The next 4 membrane-spanning stretches (helical) occupy residues 34–54, 78–99, 114–134, and 179–199; these read FGSLLGICLMTQILTGLLLAM, WLIRNLHANGASFFFICIYLHI, WNTGILLLLTLMATAFVGYVL, and FFALHFLLPFMIAGLTLIHLT. His84 and His98 together coordinate heme b. Residues His183 and His197 each contribute to the heme b site. His202 serves as a coordination point for a ubiquinone. Transmembrane regions (helical) follow at residues 227-247, 289-309, 321-341, and 348-368; these read LKDILGFTLMFLPLTALALFS, LGGVLALAASVLVLFLSPLLH, LSQLLFWLLVTNLFILTWIGS, and FIIIGQLASITYFTILLVLFP.

The protein belongs to the cytochrome b family. In terms of assembly, the cytochrome bc1 complex contains 11 subunits: 3 respiratory subunits (MT-CYB, CYC1 and UQCRFS1), 2 core proteins (UQCRC1 and UQCRC2) and 6 low-molecular weight proteins (UQCRH/QCR6, UQCRB/QCR7, UQCRQ/QCR8, UQCR10/QCR9, UQCR11/QCR10 and a cleavage product of UQCRFS1). This cytochrome bc1 complex then forms a dimer. It depends on heme b as a cofactor.

The protein resides in the mitochondrion inner membrane. Component of the ubiquinol-cytochrome c reductase complex (complex III or cytochrome b-c1 complex) that is part of the mitochondrial respiratory chain. The b-c1 complex mediates electron transfer from ubiquinol to cytochrome c. Contributes to the generation of a proton gradient across the mitochondrial membrane that is then used for ATP synthesis. The polypeptide is Cytochrome b (MT-CYB) (Thalassarche impavida (Albatross)).